The sequence spans 557 residues: Urocanate hydratase (557 aa).

Residues 53–54 (GG), Q131, 177–179 (GMG), 197–202 (ECQQSR), 243–244 (NA), 264–268 (QTSAH), 274–275 (YL), and 323–324 (YG) contribute to the NAD(+) site. C411 is a catalytic residue. NAD(+)-binding positions include 455-456 (RE) and G493.

Homodimer. The cofactor is NAD(+).

It is found in the cytoplasm. It catalyses the reaction 4-imidazolone-5-propanoate = trans-urocanate + H2O. It functions in the pathway amino-acid degradation; L-histidine degradation into L-glutamate; N-formimidoyl-L-glutamate from L-histidine: step 2/3. Catalyzes the conversion of urocanate to 4-imidazolone-5-propionate. The chain is Urocanate hydratase from Pseudomonas putida (Arthrobacter siderocapsulatus).